The chain runs to 348 residues: Phenylalanine--tRNA ligase alpha subunit (348 aa).

Glu259 lines the Mg(2+) pocket.

The protein belongs to the class-II aminoacyl-tRNA synthetase family. Phe-tRNA synthetase alpha subunit type 1 subfamily. In terms of assembly, tetramer of two alpha and two beta subunits. The cofactor is Mg(2+).

It localises to the cytoplasm. The enzyme catalyses tRNA(Phe) + L-phenylalanine + ATP = L-phenylalanyl-tRNA(Phe) + AMP + diphosphate + H(+). This Ligilactobacillus salivarius (strain UCC118) (Lactobacillus salivarius) protein is Phenylalanine--tRNA ligase alpha subunit.